Here is a 483-residue protein sequence, read N- to C-terminus: Centrosomal protein cep57l1 (483 aa).

Positions 94-228 form a coiled coil; that stretch reads EHKKVLESEK…AQVQTSLEVN (135 aa). Disordered regions lie at residues 237–261, 303–325, and 416–460; these read AQNS…SKEP, PQVS…GGSR, and KEQP…SKAS. A compositionally biased stretch (basic residues) spans 243–252; sequence RKVKKKKQSK. A coiled-coil region spans residues 375–418; sequence EDLERELDYVVKQMEIKSDQIMKLKRHQLNVNKLKKTAKLLKEQ. Over residues 420 to 435 the composition is skewed to polar residues; it reads RPTSVTKLAADKQNTG.

This sequence belongs to the translokin family. In terms of assembly, interacts with clip1, mis12, ndc80 and zwint. Interacts with gamma-tubulin.

It localises to the cytoplasm. The protein localises to the cytoskeleton. The protein resides in the microtubule organizing center. It is found in the centrosome. Its subcellular location is the chromosome. It localises to the centromere. The protein localises to the kinetochore. The protein resides in the spindle. Functionally, required for spindle microtubule attachment to both kinetochores and centrosomes. Also functions to tether minus-ends of spindle microtubules to centrosomes. May act by forming ring-like structures around microtubules, or by serving as a cross-linker or scaffold at the attachment site. The sequence is that of Centrosomal protein cep57l1 (cep57l1) from Xenopus tropicalis (Western clawed frog).